Reading from the N-terminus, the 37-residue chain is Photosystem I reaction center subunit VIII (37 aa).

The chain crosses the membrane as a helical span at residues 7-27 (LPSFFVPLVGLVFPAIAMASL).

It belongs to the PsaI family.

The protein resides in the plastid. The protein localises to the chloroplast thylakoid membrane. In terms of biological role, may help in the organization of the PsaL subunit. The chain is Photosystem I reaction center subunit VIII from Eucalyptus globulus subsp. globulus (Tasmanian blue gum).